The chain runs to 337 residues: AP2/ERF and B3 domain-containing transcription factor At1g50680 (337 aa).

Positions 27-84 (KYKGVVQQQNGHWGAQIYADHKRIWLGTFKSADEAATAYDSASIKLRSFDANSHRNFP) form a DNA-binding region, AP2/ERF. The TF-B3 DNA-binding region spans 157-271 (FQKELTPSDV…VKTLEGQRKN (115 aa)).

Belongs to the AP2/ERF transcription factor family. RAV subfamily.

Its subcellular location is the nucleus. Probably acts as a transcriptional activator. Binds to the GCC-box pathogenesis-related promoter element. May be involved in the regulation of gene expression by stress factors and by components of stress signal transduction pathways. The chain is AP2/ERF and B3 domain-containing transcription factor At1g50680 from Arabidopsis thaliana (Mouse-ear cress).